A 240-amino-acid chain; its full sequence is 3-deoxy-D-manno-octulosonic acid kinase (240 aa).

Aspartate 170 is an active-site residue.

This sequence belongs to the protein kinase superfamily. KdkA/RfaP family.

The protein localises to the cell inner membrane. It catalyses the reaction an alpha-Kdo-(2-&gt;6)-lipid IVA + ATP = a 4-O-phospho-alpha-Kdo-(2-&gt;6)-lipid IVA + ADP + H(+). Its pathway is bacterial outer membrane biogenesis; LPS core biosynthesis. Functionally, catalyzes the ATP-dependent phosphorylation of the 3-deoxy-D-manno-octulosonic acid (Kdo) residue in Kdo-lipid IV(A) at the 4-OH position. The polypeptide is 3-deoxy-D-manno-octulosonic acid kinase (Mannheimia succiniciproducens (strain KCTC 0769BP / MBEL55E)).